We begin with the raw amino-acid sequence, 353 residues long: Protein RecA (353 aa).

An ATP-binding site is contributed by 67–74 (GPESSGKT).

It belongs to the RecA family.

It localises to the cytoplasm. Functionally, can catalyze the hydrolysis of ATP in the presence of single-stranded DNA, the ATP-dependent uptake of single-stranded DNA by duplex DNA, and the ATP-dependent hybridization of homologous single-stranded DNAs. It interacts with LexA causing its activation and leading to its autocatalytic cleavage. This Shewanella sediminis (strain HAW-EB3) protein is Protein RecA.